We begin with the raw amino-acid sequence, 1070 residues long: Phosphatidylinositol 4,5-bisphosphate 3-kinase catalytic subunit beta isoform (1070 aa).

A PI3K-ABD domain is found at 26 to 115 (SDGSIPVDFL…LPVLKLVTRS (90 aa)). The PI3K-RBD domain occupies 194–285 (GGKLIVAVHF…RALPHFILVE (92 aa)). Residue Ser324 is modified to Phosphoserine. The C2 PI3K-type domain maps to 327-496 (WENNNPFQIV…NATALHVKFP (170 aa)). The Nuclear localization signal motif lies at 410 to 418 (KVKTKKSTK). In terms of domain architecture, PIK helical spans 524-701 (ANVSSRGGKK…GVILEAYCRG (178 aa)). A PI3K/PI4K catalytic domain is found at 772 to 1053 (YVEKCKYMDS…KFDEALRESW (282 aa)). The segment at 778-784 (YMDSKMK) is G-loop. The catalytic loop stretch occupies residues 916 to 924 (GIGDRHSDN). The segment at 935–961 (HIDFGHILGNFKSKFGIKRERVPFILT) is activation loop. Phosphoserine; by autocatalysis is present on Ser1070.

The protein belongs to the PI3/PI4-kinase family. In terms of assembly, heterodimer of a catalytic subunit PIK3CB and a p85 regulatory subunit (PIK3R1, PIK3R2 or PIK3R3). Interaction with PIK3R2 is required for nuclear localization and nuclear export. Part of a complex with PIK3R1 and PTEN. Binding to PTEN may antagonize the lipid kinase activity under normal growth conditions. Part of a complex involved in autophagosome formation composed of PIK3C3 and PIK3R4. Interacts with BECN1, ATG14 and RAB5A. Post-translationally, autophosphorylation at Ser-1070 negatively regulates the phosphatidylinositol-4,5-bisphosphate 3-kinase activity. As to expression, expressed ubiquitously.

The protein resides in the cytoplasm. The protein localises to the nucleus. The catalysed reaction is a 1,2-diacyl-sn-glycero-3-phospho-(1D-myo-inositol-4,5-bisphosphate) + ATP = a 1,2-diacyl-sn-glycero-3-phospho-(1D-myo-inositol-3,4,5-trisphosphate) + ADP + H(+). It carries out the reaction 1-octadecanoyl-2-(5Z,8Z,11Z,14Z)-eicosatetraenoyl-sn-glycero-3-phospho-1D-myo-inositol 4,5-bisphosphate + ATP = 1-octadecanoyl-2-(5Z,8Z,11Z,14Z-eicosatetraenoyl)-sn-glycero-3-phospho-(1D-myo-inositol 3,4,5-triphosphate) + ADP + H(+). It catalyses the reaction L-seryl-[protein] + ATP = O-phospho-L-seryl-[protein] + ADP + H(+). It participates in phospholipid metabolism; phosphatidylinositol phosphate biosynthesis. In terms of biological role, phosphoinositide-3-kinase (PI3K) phosphorylates phosphatidylinositol derivatives at position 3 of the inositol ring to produce 3-phosphoinositides. Uses ATP and PtdIns(4,5)P2 (phosphatidylinositol 4,5-bisphosphate) to generate phosphatidylinositol 3,4,5-trisphosphate (PIP3). PIP3 plays a key role by recruiting PH domain-containing proteins to the membrane, including AKT1 and PDPK1, activating signaling cascades involved in cell growth, survival, proliferation, motility and morphology. Involved in the activation of AKT1 upon stimulation by G-protein coupled receptors (GPCRs) ligands such as CXCL12, sphingosine 1-phosphate, and lysophosphatidic acid. May also act downstream receptor tyrosine kinases. Required in different signaling pathways for stable platelet adhesion and aggregation. Plays a role in platelet activation signaling triggered by GPCRs, alpha-IIb/beta-3 integrins (ITGA2B/ ITGB3) and ITAM (immunoreceptor tyrosine-based activation motif)-bearing receptors such as GP6. Regulates the strength of adhesion of ITGA2B/ ITGB3 activated receptors necessary for the cellular transmission of contractile forces. Required for platelet aggregation induced by F2 (thrombin) and thromboxane A2 (TXA2). Has a role in cell survival. May have a role in cell migration. Involved in the early stage of autophagosome formation. Modulates the intracellular level of PtdIns3P (phosphatidylinositol 3-phosphate) and activates PIK3C3 kinase activity. May act as a scaffold, independently of its lipid kinase activity to positively regulate autophagy. May have a role in insulin signaling as scaffolding protein in which the lipid kinase activity is not required. May have a kinase-independent function in regulating cell proliferation and in clathrin-mediated endocytosis. Mediator of oncogenic signal in cell lines lacking PTEN. The lipid kinase activity is necessary for its role in oncogenic transformation. Required for the growth of ERBB2 and RAS driven tumors. Also has a protein kinase activity showing autophosphorylation. The protein is Phosphatidylinositol 4,5-bisphosphate 3-kinase catalytic subunit beta isoform (PIK3CB) of Homo sapiens (Human).